A 932-amino-acid chain; its full sequence is Myelin gene regulatory factor-like A (932 aa).

2 stretches are compositionally biased toward low complexity: residues 1–19 (MDGY…QQHQ) and 33–48 (QQQQ…QQQQ). Disordered stretches follow at residues 1–63 (MDGY…ISNG), 152–256 (VNSP…LSSS), 269–328 (TNTQ…NENP), 540–568 (VTPP…SNNM), 582–601 (TMNI…LSQL), 613–660 (TQNH…NNNN), and 680–726 (NINN…CHWN). A compositionally biased stretch (polar residues) spans 49–59 (PMNGSNNQLLG). Residues 127 to 154 (LDSSFLMLQQQLQDQQQQIAQFNSSVNS) are a coiled coil. 2 stretches are compositionally biased toward low complexity: residues 152–249 (VNSP…ANNT) and 277–294 (PRSI…TNSP). A DNA-binding region (NDT80) is located at residues 286–546 (PNLSPTNSPI…ATQVTPPGDL (261 aa)). The segment covering 311-328 (ENENSDPPSPMTQYNENP) has biased composition (polar residues). Low complexity-rich tracts occupy residues 615–660 (NHNN…NNNN) and 680–721 (NINN…NNNN). One can recognise a Peptidase S74 domain in the interval 767–877 (SDLRIKYDLK…KQMDEMKLKL (111 aa)). Positions 863-895 (TQELSKQMDEMKLKLITYESKLKNLKKKSKNQT) form a coiled coil. Residues 895 to 915 (TILLIIFMITFLLVALYMYKP) form a helical membrane-spanning segment.

It localises to the membrane. Its function is as follows. Transcription factor which acts as a key regulator of pstA (prestalk-A) cells differentiation. Essential for ecmA-specific gene expression. The sequence is that of Myelin gene regulatory factor-like A (mrfA) from Dictyostelium discoideum (Social amoeba).